The sequence spans 176 residues: Large ribosomal subunit protein eL20 (176 aa).

The protein belongs to the eukaryotic ribosomal protein eL20 family. In terms of assembly, component of the large ribosomal subunit.

It localises to the cytoplasm. In terms of biological role, component of the large ribosomal subunit. The ribosome is a large ribonucleoprotein complex responsible for the synthesis of proteins in the cell. The sequence is that of Large ribosomal subunit protein eL20 (rpl18a) from Salmo salar (Atlantic salmon).